A 302-amino-acid polypeptide reads, in one-letter code: Succinate--CoA ligase [ADP-forming] subunit alpha (302 aa).

Residues 17–20 (TGST), K43, and 96–98 (ITE) contribute to the CoA site. Y159 provides a ligand contact to substrate. Residue H247 is the Tele-phosphohistidine intermediate of the active site.

The protein belongs to the succinate/malate CoA ligase alpha subunit family. In terms of assembly, heterotetramer of two alpha and two beta subunits.

It carries out the reaction succinate + ATP + CoA = succinyl-CoA + ADP + phosphate. It catalyses the reaction GTP + succinate + CoA = succinyl-CoA + GDP + phosphate. Its pathway is carbohydrate metabolism; tricarboxylic acid cycle; succinate from succinyl-CoA (ligase route): step 1/1. In terms of biological role, succinyl-CoA synthetase functions in the citric acid cycle (TCA), coupling the hydrolysis of succinyl-CoA to the synthesis of either ATP or GTP and thus represents the only step of substrate-level phosphorylation in the TCA. The alpha subunit of the enzyme binds the substrates coenzyme A and phosphate, while succinate binding and nucleotide specificity is provided by the beta subunit. The chain is Succinate--CoA ligase [ADP-forming] subunit alpha from Staphylococcus aureus (strain MSSA476).